Here is a 118-residue protein sequence, read N- to C-terminus: Protein YLR162W (118 aa).

Over residues 1–20 (MQHTLTRTASLPERSSSAHS) the composition is skewed to polar residues. Residues 1-26 (MQHTLTRTASLPERSSSAHSAATALP) are disordered. The helical transmembrane segment at 38–58 (LVPLLCIFWFVFVSMSPLPPA) threads the bilayer.

It localises to the membrane. Functionally, overexpression confers resistance to the antimicrobial peptide MiAMP1. In Saccharomyces cerevisiae (strain ATCC 204508 / S288c) (Baker's yeast), this protein is Protein YLR162W.